A 185-amino-acid chain; its full sequence is Ribosome-recycling factor (185 aa).

The protein belongs to the RRF family.

It is found in the cytoplasm. Responsible for the release of ribosomes from messenger RNA at the termination of protein biosynthesis. May increase the efficiency of translation by recycling ribosomes from one round of translation to another. This Bacillus cytotoxicus (strain DSM 22905 / CIP 110041 / 391-98 / NVH 391-98) protein is Ribosome-recycling factor.